Here is a 614-residue protein sequence, read N- to C-terminus: Numb-like protein (614 aa).

Disordered stretches follow at residues 1–68, 223–283, 371–420, 448–468, and 539–614; these read MSRS…QWQA, GSFR…PVAA, FASA…LEEV, QQQQATSVPPMPTMAPTLQPF, and LGKA…EIEL. In terms of domain architecture, PID spans 74 to 223; it reads RKGTCSFPVR…ASRTSFAREG (150 aa). A phosphoserine mark is found at S224 and S228. Over residues 233 to 245 the composition is skewed to basic and acidic residues; it reads PAEREAGDKKKAE. A compositionally biased stretch (low complexity) spans 246–260; the sequence is AAAAPAVAPGPAQPG. S263 bears the Phosphoserine mark. Phosphothreonine is present on T279. Positions 371–390 are enriched in low complexity; the sequence is FASAGAPVPGPPSATTGTSA. Residues 409–418 show a composition bias toward basic and acidic residues; the sequence is TPSEAERWLE. Residue S411 is modified to Phosphoserine. The span at 563–578 shows a compositional bias: pro residues; sequence NGAPWPPEPAPAPAPE.

As to quaternary structure, associates with EPS15 and NOTCH1. Interacts (via PTB domain) with MAP3K7IP2 (via C-terminal). Interacts (via C-terminal) with TRAF6 (via TRAF domains).

Its subcellular location is the cytoplasm. Plays a role in the process of neurogenesis. Required throughout embryonic neurogenesis to maintain neural progenitor cells, also called radial glial cells (RGCs), by allowing their daughter cells to choose progenitor over neuronal cell fate. Not required for the proliferation of neural progenitor cells before the onset of embryonic neurogenesis. Also required postnatally in the subventricular zone (SVZ) neurogenesis by regulating SVZ neuroblasts survival and ependymal wall integrity. Negative regulator of NF-kappa-B signaling pathway. The inhibition of NF-kappa-B activation is mediated at least in part, by preventing MAP3K7IP2 to interact with polyubiquitin chains of TRAF6 and RIPK1 and by stimulating the 'Lys-48'-linked polyubiquitination and degradation of TRAF6 in cortical neurons. This chain is Numb-like protein (Numbl), found in Rattus norvegicus (Rat).